The chain runs to 261 residues: 3-hydroxyacyl-CoA dehydrogenase type-2 (261 aa).

At Ala-2 the chain carries N-acetylalanine. NAD(+) is bound by residues Ser-20, Leu-22, and Asp-41. N6-acetyllysine; alternate is present on Lys-53. Position 53 is an N6-succinyllysine; alternate (Lys-53). NAD(+) is bound by residues Asp-64 and Val-65. Lys-69 is subject to N6-acetyllysine. Cys-91 is an NAD(+) binding site. N6-acetyllysine occurs at positions 99 and 105. Residue Ser-155 coordinates substrate. Residues Tyr-168, Lys-172, Phe-201, and Thr-203 each coordinate NAD(+). The active-site Proton acceptor is Tyr-168. Lys-212 is modified (N6-acetyllysine; alternate). The residue at position 212 (Lys-212) is an N6-succinyllysine; alternate.

The protein belongs to the short-chain dehydrogenases/reductases (SDR) family. In terms of assembly, homotetramer. Component of mitochondrial ribonuclease P, a complex composed of TRMT10C/MRPP1, HSD17B10/MRPP2 and PRORP/MRPP3. Interacts with TRMT10C/MRPP1; forming the MRPP1-MRPP2 subcomplex of the mitochondrial ribonuclease P complex. As to expression, ubiquitously expressed in normal tissues but is overexpressed in neurons affected in AD.

The protein resides in the mitochondrion. It localises to the mitochondrion matrix. Its subcellular location is the mitochondrion nucleoid. The catalysed reaction is a (3S)-3-hydroxyacyl-CoA + NAD(+) = a 3-oxoacyl-CoA + NADH + H(+). It catalyses the reaction (2S,3S)-3-hydroxy-2-methylbutanoyl-CoA + NAD(+) = 2-methyl-3-oxobutanoyl-CoA + NADH + H(+). It carries out the reaction testosterone + NAD(+) = androst-4-ene-3,17-dione + NADH + H(+). The enzyme catalyses 5alpha-androstane-3alpha,17beta-diol + NAD(+) = 17beta-hydroxy-5alpha-androstan-3-one + NADH + H(+). The catalysed reaction is 17beta-estradiol + NAD(+) = estrone + NADH + H(+). It catalyses the reaction cholate + NAD(+) = 3alpha,12alpha-dihydroxy-7-oxo-5beta-cholanate + NADH + H(+). It carries out the reaction (3S)-3-hydroxybutanoyl-CoA + NAD(+) = acetoacetyl-CoA + NADH + H(+). The enzyme catalyses (3S)-hydroxyoctanoyl-CoA + NAD(+) = 3-oxooctanoyl-CoA + NADH + H(+). The catalysed reaction is (3S)-hydroxyhexadecanoyl-CoA + NAD(+) = 3-oxohexadecanoyl-CoA + NADH + H(+). It catalyses the reaction 17beta-hydroxy-5alpha-androstan-3-one + NAD(+) = 5alpha-androstan-3,17-dione + NADH + H(+). It carries out the reaction 5alpha-pregnan-20beta-ol-3-one + NAD(+) = 5alpha-pregnane-3,20-dione + NADH + H(+). The enzyme catalyses 3alpha-hydroxy-5alpha-pregnan-20-one + NAD(+) = 5alpha-pregnane-3,20-dione + NADH + H(+). The catalysed reaction is cortisone + NAD(+) = 17alpha-hydroxypregn-4-en-3,11,20-trione-21-al + NADH + H(+). It catalyses the reaction 11-dehydrocorticosterone + NAD(+) = pregn-4-ene-3,11,20,21-tetraone + NADH + H(+). It carries out the reaction cortisol + NAD(+) = 11beta,17alpha-dihydroxypregn-4-ene-3,20,21-trione + NADH + H(+). The enzyme catalyses chenodeoxycholate + NAD(+) = 7-oxolithocholate + NADH + H(+). The catalysed reaction is ursodeoxycholate + NAD(+) = 7-oxolithocholate + NADH + H(+). It catalyses the reaction 3beta,7beta-dihydroxy-5beta-cholan-24-oate + NAD(+) = 3beta-hydroxy-7-oxo-5beta-cholan-24-oate + NADH + H(+). Its pathway is amino-acid degradation; L-isoleucine degradation. It functions in the pathway lipid metabolism; fatty acid beta-oxidation. The protein operates within steroid metabolism. It participates in lipid metabolism; bile acid biosynthesis. The phospholipase C-like activity toward cardiolipin is inhibited by amyloid-beta peptide. In terms of biological role, mitochondrial dehydrogenase involved in pathways of fatty acid, branched-chain amino acid and steroid metabolism. Acts as (S)-3-hydroxyacyl-CoA dehydrogenase in mitochondrial fatty acid beta-oxidation, a major degradation pathway of fatty acids. Catalyzes the third step in the beta-oxidation cycle, namely the reversible conversion of (S)-3-hydroxyacyl-CoA to 3-ketoacyl-CoA. Preferentially accepts straight medium- and short-chain acyl-CoA substrates with highest efficiency for (3S)-hydroxybutanoyl-CoA. Acts as 3-hydroxy-2-methylbutyryl-CoA dehydrogenase in branched-chain amino acid catabolic pathway. Catalyzes the oxidation of 3-hydroxy-2-methylbutanoyl-CoA into 2-methyl-3-oxobutanoyl-CoA, a step in isoleucine degradation pathway. Has hydroxysteroid dehydrogenase activity toward steroid hormones and bile acids. Catalyzes the oxidation of 3alpha-, 17beta-, 20beta- and 21-hydroxysteroids and 7alpha- and 7beta-hydroxy bile acids. Oxidizes allopregnanolone/brexanolone at the 3alpha-hydroxyl group, which is known to be critical for the activation of gamma-aminobutyric acid receptors (GABAARs) chloride channel. Has phospholipase C-like activity toward cardiolipin and its oxidized species. Likely oxidizes the 2'-hydroxyl in the head group of cardiolipin to form a ketone intermediate that undergoes nucleophilic attack by water and fragments into diacylglycerol, dihydroxyacetone and orthophosphate. Has higher affinity for cardiolipin with oxidized fatty acids and may degrade these species during the oxidative stress response to protect cells from apoptosis. By interacting with intracellular amyloid-beta, it may contribute to the neuronal dysfunction associated with Alzheimer disease (AD). Essential for structural and functional integrity of mitochondria. Its function is as follows. In addition to mitochondrial dehydrogenase activity, moonlights as a component of mitochondrial ribonuclease P, a complex that cleaves tRNA molecules in their 5'-ends. Together with TRMT10C/MRPP1, forms a subcomplex of the mitochondrial ribonuclease P, named MRPP1-MRPP2 subcomplex, which displays functions that are independent of the ribonuclease P activity. The MRPP1-MRPP2 subcomplex catalyzes the formation of N(1)-methylguanine and N(1)-methyladenine at position 9 (m1G9 and m1A9, respectively) in tRNAs; HSD17B10/MRPP2 acting as a non-catalytic subunit. The MRPP1-MRPP2 subcomplex also acts as a tRNA maturation platform: following 5'-end cleavage by the mitochondrial ribonuclease P complex, the MRPP1-MRPP2 subcomplex enhances the efficiency of 3'-processing catalyzed by ELAC2, retains the tRNA product after ELAC2 processing and presents the nascent tRNA to the mitochondrial CCA tRNA nucleotidyltransferase TRNT1 enzyme. Associates with mitochondrial DNA complexes at the nucleoids to initiate RNA processing and ribosome assembly. This chain is 3-hydroxyacyl-CoA dehydrogenase type-2 (HSD17B10), found in Homo sapiens (Human).